The sequence spans 175 residues: Alpha-crystallin B chain (175 aa).

M1 bears the N-acetylmethionine mark. Residues S19, S45, and S59 each carry the phosphoserine modification. The 109-residue stretch at 56–164 (RAPSWIDTGL…PERTIPITRE (109 aa)) folds into the sHSP domain. H83 serves as a coordination point for Zn(2+). K92 is modified (N6-acetyllysine). Zn(2+)-binding residues include H104, E106, H111, and H119. Residues 145 to 175 (VNGPRKQVSGPERTIPITREEKPAVAAAPKK) form a disordered region. K166 bears the N6-acetyllysine mark.

This sequence belongs to the small heat shock protein (HSP20) family. In terms of assembly, heteromer composed of three CRYAA and one CRYAB subunits. Aggregates with homologous proteins, including the small heat shock protein HSPB1, to form large heteromeric complexes. Inter-subunit bridging via zinc ions enhances stability, which is crucial as there is no protein turn over in the lens. Interacts with HSPBAP1. Interacts with TTN/titin. Interacts with TMEM109; in the cellular response to DNA damage. Interacts with DES; binds rapidly during early stages of DES filament assembly and a reduced binding seen in the later stages. Interacts with TMED10; the interaction mediates the translocation from the cytoplasm into the ERGIC (endoplasmic reticulum-Golgi intermediate compartment) and thereby secretion. Interacts with ATP6V1A and with MTOR, forming a ternary complex. Abundantly expressed in the lens of the eye. Expressed in ventricular cardiomyocytes of the heart. Also expressed in skeletal muscle and the kidney.

The protein resides in the cytoplasm. The protein localises to the cytosol. It is found in the nucleus. It localises to the secreted. Its subcellular location is the lysosome. Functionally, may contribute to the transparency and refractive index of the lens. Has chaperone-like activity, preventing aggregation of various proteins under a wide range of stress conditions. In lens epithelial cells, stabilizes the ATP6V1A protein, preventing its degradation by the proteasome. This Mus musculus (Mouse) protein is Alpha-crystallin B chain.